A 326-amino-acid chain; its full sequence is D-allose transport system permease protein AlsC (326 aa).

Over 1-18 the chain is Cytoplasmic; it reads MGFTTRVKSEASEKKPFN. Residues 19–39 form a helical membrane-spanning segment; sequence FALFWDKYGTFFILAIIVAIF. The Periplasmic segment spans residues 40–70; that stretch reads GSLSPEYFLTTNNITQIFVQSSVTVLIGMGE. A helical membrane pass occupies residues 71 to 91; it reads FFAILVAGIDLSVGAILALSG. Over 92–101 the chain is Cytoplasmic; that stretch reads MVTAKLMLAG. A helical transmembrane segment spans residues 102-122; that stretch reads VDPFLAAMIGGVLVGGALGAI. Residues 123–124 are Periplasmic-facing; the sequence is NG. A helical transmembrane segment spans residues 125–145; the sequence is CLVNWTGLHPFIITLGTNAIF. The Cytoplasmic segment spans residues 146–149; it reads RGIT. Residues 150–170 form a helical membrane-spanning segment; sequence LVISDANSVYGFSFDFVNFFA. Topologically, residues 171–172 are periplasmic; sequence AS. The helical transmembrane segment at 173–193 threads the bilayer; the sequence is VIGIPVPVIFSLIVALILWFL. Residues 194-221 lie on the Cytoplasmic side of the membrane; sequence TTRMRLGRNIYALGGNKNSAFYSGIDVK. Residues 222–242 traverse the membrane as a helical segment; that stretch reads FHILVVFIISGVCAGLAGVVS. The Periplasmic portion of the chain corresponds to 243–252; it reads TARLGAAEPL. Residues 253-273 form a helical membrane-spanning segment; the sequence is AGMGFETYAIASAIIGGTSFF. The Cytoplasmic portion of the chain corresponds to 274–278; sequence GGKGR. Transmembrane regions (helical) follow at residues 279-299 and 300-320; these read IFSV…LNIL and QVQT…AVAL. Residues 321-326 lie on the Cytoplasmic side of the membrane; that stretch reads DRLISK.

Belongs to the binding-protein-dependent transport system permease family. AraH/RbsC subfamily.

Its subcellular location is the cell inner membrane. Functionally, part of the binding-protein-dependent transport system AlsBAC for D-allose; probably responsible for the translocation of the substrate across the membrane. The polypeptide is D-allose transport system permease protein AlsC (alsC) (Escherichia coli (strain K12)).